A 314-amino-acid polypeptide reads, in one-letter code: Aspartate carbamoyltransferase catalytic subunit (314 aa).

Carbamoyl phosphate contacts are provided by Arg-55 and Thr-56. Lys-83 lines the L-aspartate pocket. Carbamoyl phosphate is bound by residues Arg-105, His-139, and Gln-142. L-aspartate is bound by residues Arg-172 and Arg-226. The carbamoyl phosphate site is built by Gly-267 and Pro-268.

This sequence belongs to the aspartate/ornithine carbamoyltransferase superfamily. ATCase family. Heterododecamer (2C3:3R2) of six catalytic PyrB chains organized as two trimers (C3), and six regulatory PyrI chains organized as three dimers (R2).

The catalysed reaction is carbamoyl phosphate + L-aspartate = N-carbamoyl-L-aspartate + phosphate + H(+). It functions in the pathway pyrimidine metabolism; UMP biosynthesis via de novo pathway; (S)-dihydroorotate from bicarbonate: step 2/3. Catalyzes the condensation of carbamoyl phosphate and aspartate to form carbamoyl aspartate and inorganic phosphate, the committed step in the de novo pyrimidine nucleotide biosynthesis pathway. The sequence is that of Aspartate carbamoyltransferase catalytic subunit from Rhodococcus jostii (strain RHA1).